A 117-amino-acid polypeptide reads, in one-letter code: MNVSFLNHSGLEEVGGDARATLGNRSHGLGTWLDCCPGGAPLTASDGVPAGLAPDERSLWVSRVAQIAVLCVLSLTVVFGVFFLGCNLLIKSESMINFLMQERRPSKDVGAAILGLY.

Residues 64 to 84 (VAQIAVLCVLSLTVVFGVFFL) form a helical membrane-spanning segment. Residue Ser-106 is modified to Phosphoserine.

This sequence belongs to the reprimo family.

The protein resides in the membrane. In Mus musculus (Mouse), this protein is Reprimo-like protein (Rprml).